A 249-amino-acid chain; its full sequence is Very-long-chain (3R)-3-hydroxyacyl-CoA dehydratase 1 (249 aa).

The segment at 1-22 (MASSEEDGTNGGASEAGEEKEA) is disordered. The Cytoplasmic segment spans residues 1–36 (MASSEEDGTNGGASEAGEEKEAPGRRRRLGLLATVW). A helical membrane pass occupies residues 37 to 56 (LTFYNIAMTAGWLVLAIAMV). The Lumenal segment spans residues 57-75 (RFYMEKGTHKGLYKSIQKT). Residues 76–92 (LKFFQTFALLEIVHCLI) traverse the membrane as a helical segment. Residues 93-102 (GIVPTSVIVA) are Cytoplasmic-facing. A helical transmembrane segment spans residues 103 to 120 (GVQVSSRIFMVWLITHSI). At 121-126 (KPIQNE) the chain is on the lumenal side. Residues 127 to 141 (ESVVLFLVAWTVTEI) form a helical membrane-spanning segment. Topologically, residues 142-164 (TRYSFYTFSLLDHLPYFIKWARY) are cytoplasmic. A helical transmembrane segment spans residues 165–182 (NFFIILYPVGVVGELLTI). Catalysis depends on residues Y171 and E178. The Lumenal portion of the chain corresponds to 183-212 (YAALPYVKKTGMFSIRLPNKYNVSFDYYYF). N204 carries an N-linked (GlcNAc...) asparagine glycan. The chain crosses the membrane as a helical span at residues 213 to 230 (LLITMASYIPLFPQLYFH). The Cytoplasmic portion of the chain corresponds to 231-249 (MLRQRRKVLHGEVIVEKDD).

This sequence belongs to the very long-chain fatty acids dehydratase HACD family. May interact with enzymes of the ELO family (including ELOVL1); with those enzymes that mediate condensation, the first of the four steps of the reaction cycle responsible for fatty acids elongation, may be part of a larger fatty acids elongase complex. Interacts with TECR. As to expression, skeletal muscle.

Its subcellular location is the endoplasmic reticulum membrane. It carries out the reaction a very-long-chain (3R)-3-hydroxyacyl-CoA = a very-long-chain (2E)-enoyl-CoA + H2O. The catalysed reaction is (3R)-hydroxyhexadecanoyl-CoA = (2E)-hexadecenoyl-CoA + H2O. It catalyses the reaction (3R)-hydroxyoctadecanoyl-CoA = (2E)-octadecenoyl-CoA + H2O. The enzyme catalyses (3R)-hydroxyeicosanoyl-CoA = (2E)-eicosenoyl-CoA + H2O. It carries out the reaction (3R)-hydroxydocosanoyl-CoA = (2E)-docosenoyl-CoA + H2O. The catalysed reaction is (3R)-hydroxytetracosanoyl-CoA = (2E)-tetracosenoyl-CoA + H2O. It catalyses the reaction (3R)-hydroxyhexacosanoyl-CoA = (2E)-hexacosenoyl-CoA + H2O. Its pathway is lipid metabolism; fatty acid biosynthesis. Functionally, catalyzes the third of the four reactions of the long-chain fatty acids elongation cycle. This endoplasmic reticulum-bound enzymatic process, allows the addition of two carbons to the chain of long- and very long-chain fatty acids/VLCFAs per cycle. This enzyme catalyzes the dehydration of the 3-hydroxyacyl-CoA intermediate into trans-2,3-enoyl-CoA, within each cycle of fatty acid elongation. Thereby, it participates in the production of VLCFAs of different chain lengths that are involved in multiple biological processes as precursors of membrane lipids and lipid mediators. The polypeptide is Very-long-chain (3R)-3-hydroxyacyl-CoA dehydratase 1 (HACD1) (Canis lupus familiaris (Dog)).